A 188-amino-acid chain; its full sequence is Protein-arginine kinase activator protein (188 aa).

4 short sequence motifs (CXXC metal binding motif) span residues 3–6 (CENC), 29–32 (CQTC), 87–90 (CPSC), and 105–108 (CANC). Positions 145-180 (KRKIEEKNEYLKKLIEIQDFEEAAIVRDEIKALKAE) constitute a UVR domain.

In terms of assembly, interacts with McsB and CtsR; the CXXC motifs are needed for the binding.

Functionally, activates the phosphorylation activity of the protein-arginine kinase McsB. May function as an important molecule for oxidative tolerance in various types of stress including that of heavy metals. Binds to Cu(2+), Zn(2+), Co(2+) and Cd(2+) via its CXXC metal binding motifs. The chain is Protein-arginine kinase activator protein from Staphylococcus aureus (strain NCTC 8325 / PS 47).